The chain runs to 132 residues: Small ribosomal subunit protein uS8c (132 aa).

The protein belongs to the universal ribosomal protein uS8 family. In terms of assembly, part of the 30S ribosomal subunit.

Its subcellular location is the plastid. The protein resides in the chloroplast. In terms of biological role, one of the primary rRNA binding proteins, it binds directly to 16S rRNA central domain where it helps coordinate assembly of the platform of the 30S subunit. The polypeptide is Small ribosomal subunit protein uS8c (rps8) (Calycanthus floridus var. glaucus (Eastern sweetshrub)).